Consider the following 346-residue polypeptide: (R,R)-butanediol dehydrogenase (346 aa).

Residues Cys-37, His-70, and Glu-152 each coordinate Zn(2+).

This sequence belongs to the zinc-containing alcohol dehydrogenase family. As to quaternary structure, homotetramer. Interacts with BrxC. Requires Zn(2+) as cofactor.

The protein resides in the cytoplasm. Its subcellular location is the secreted. The catalysed reaction is (R,R)-butane-2,3-diol + NAD(+) = (R)-acetoin + NADH + H(+). In Bacillus subtilis (strain 168), this protein is (R,R)-butanediol dehydrogenase.